A 249-amino-acid chain; its full sequence is Carboxy-S-adenosyl-L-methionine synthase (249 aa).

S-adenosyl-L-methionine-binding positions include Tyr39, 64 to 66 (GCS), 117 to 118 (DI), Asn132, and Arg199.

The protein belongs to the class I-like SAM-binding methyltransferase superfamily. Cx-SAM synthase family. Homodimer.

The catalysed reaction is prephenate + S-adenosyl-L-methionine = carboxy-S-adenosyl-L-methionine + 3-phenylpyruvate + H2O. Functionally, catalyzes the conversion of S-adenosyl-L-methionine (SAM) to carboxy-S-adenosyl-L-methionine (Cx-SAM). The chain is Carboxy-S-adenosyl-L-methionine synthase from Aeromonas hydrophila subsp. hydrophila (strain ATCC 7966 / DSM 30187 / BCRC 13018 / CCUG 14551 / JCM 1027 / KCTC 2358 / NCIMB 9240 / NCTC 8049).